We begin with the raw amino-acid sequence, 84 residues long: Small ribosomal subunit protein bS20 (84 aa).

Belongs to the bacterial ribosomal protein bS20 family.

Its function is as follows. Binds directly to 16S ribosomal RNA. This Limosilactobacillus reuteri (strain DSM 20016) (Lactobacillus reuteri) protein is Small ribosomal subunit protein bS20.